Reading from the N-terminus, the 298-residue chain is MVRQYKIHTNLDGTDDKVLDVTNGKVRLYQPSNLGLQSTNNIWQSNGIGVMGKRSITQPQIEFKLETFGESLEENYQLMKDFVNDILSKKFVTLEYQTEIFQVYADLALADVTKTEGYGKNGTFSEKITFDIITKWYTYENLTFDKIENGKVIAGMSKVYGGTELGGYKYIEGTSYTYYGETNIERLSRWDIKDEIFSFMGILYPQLPKTPAGVRFLDDTGNEYTAIVFKTEQAQDYILINTDVNDEVYQGWNGTTSLNLFPVMDFERYRTRIIEKGQMELINLSKAEFKIKRKADFV.

This sequence belongs to the skunalikevirus distal tail protein family. As to quaternary structure, homohexamer. Interacts with the receptor binding protein.

It is found in the virion. In terms of biological role, forms the distal part of the tail. Self-associates as two rings organized back to back, with a central channel allowing DNA ejection. In Lactococcus phage SK1 (Lactococcus lactis bacteriophage SK1), this protein is Distal tail protein.